Here is a 764-residue protein sequence, read N- to C-terminus: Putative wall-associated receptor kinase-like 13 (764 aa).

The N-terminal stretch at 1–26 (MRGNKNYYFLSLLYFLSLPILHFSSC) is a signal peptide. The Extracellular portion of the chain corresponds to 27 to 379 (THKCGDIQIP…HRCIDYHIPE (353 aa)). Residues asparagine 78, asparagine 114, asparagine 121, asparagine 164, asparagine 233, asparagine 238, asparagine 259, and asparagine 283 are each glycosylated (N-linked (GlcNAc...) asparagine). The atypical EGF-like stretch occupies residues 308–372 (CTCDNHIASG…CINTSGGHRC (65 aa)). Intrachain disulfides connect cysteine 310/cysteine 323, cysteine 345/cysteine 363, and cysteine 352/cysteine 372. N-linked (GlcNAc...) asparagine glycosylation is present at asparagine 365. The helical transmembrane segment at 380 to 400 (VMLGLGAGFFVLIVGGGIWWW) threads the bilayer. Residues 401 to 764 (RKLLRKRRMT…SGSTEIARSM (364 aa)) are Cytoplasmic-facing. Residues 454–728 (FNDNRVIGQG…REVSTALERI (275 aa)) form the Protein kinase domain. Residues 460-468 (IGQGGQGTV) and lysine 482 contribute to the ATP site. Phosphotyrosine is present on tyrosine 527. Catalysis depends on aspartate 579, which acts as the Proton acceptor. Phosphothreonine is present on residues threonine 613 and threonine 618. The residue at position 626 (tyrosine 626) is a Phosphotyrosine.

The protein belongs to the protein kinase superfamily. Ser/Thr protein kinase family.

It is found in the membrane. The enzyme catalyses L-seryl-[protein] + ATP = O-phospho-L-seryl-[protein] + ADP + H(+). It catalyses the reaction L-threonyl-[protein] + ATP = O-phospho-L-threonyl-[protein] + ADP + H(+). Putative serine/threonine-protein kinase that may function as a signaling receptor of extracellular matrix component. In Arabidopsis thaliana (Mouse-ear cress), this protein is Putative wall-associated receptor kinase-like 13 (WAKL13).